The chain runs to 385 residues: Flap endonuclease 1 (385 aa).

The interval 1–104 (MGILGLSKLI…GELAKRAERR (104 aa)) is N-domain. Position 34 (aspartate 34) interacts with Mg(2+). Positions 47 and 70 each coordinate DNA. Positions 86, 158, 160, 179, and 181 each coordinate Mg(2+). Residues 122-253 (GIEKFNRRLV…KRAIELINTY (132 aa)) form an I-domain region. DNA is bound at residue glutamate 158. 2 residues coordinate DNA: glycine 231 and aspartate 233. Aspartate 233 is a binding site for Mg(2+). The interaction with PCNA stretch occupies residues 336-344 (TQVRLDSFF). Positions 346–385 (TLPSTPNATNAAKRKAEEAKKSANNKKAKTSGGGRGRRPK) are disordered. Residues 368–385 (ANNKKAKTSGGGRGRRPK) are compositionally biased toward basic residues.

It belongs to the XPG/RAD2 endonuclease family. FEN1 subfamily. As to quaternary structure, interacts with PCNA. Three molecules of FEN1 bind to one PCNA trimer with each molecule binding to one PCNA monomer. PCNA stimulates the nuclease activity without altering cleavage specificity. Mg(2+) is required as a cofactor. In terms of processing, phosphorylated. Phosphorylation upon DNA damage induces relocalization to the nuclear plasma.

It localises to the nucleus. It is found in the nucleolus. The protein resides in the nucleoplasm. Its subcellular location is the mitochondrion. In terms of biological role, structure-specific nuclease with 5'-flap endonuclease and 5'-3' exonuclease activities involved in DNA replication and repair. During DNA replication, cleaves the 5'-overhanging flap structure that is generated by displacement synthesis when DNA polymerase encounters the 5'-end of a downstream Okazaki fragment. It enters the flap from the 5'-end and then tracks to cleave the flap base, leaving a nick for ligation. Also involved in the long patch base excision repair (LP-BER) pathway, by cleaving within the apurinic/apyrimidinic (AP) site-terminated flap. Acts as a genome stabilization factor that prevents flaps from equilibrating into structures that lead to duplications and deletions. Also possesses 5'-3' exonuclease activity on nicked or gapped double-stranded DNA, and exhibits RNase H activity. Also involved in replication and repair of rDNA and in repairing mitochondrial DNA. This is Flap endonuclease 1 from Drosophila simulans (Fruit fly).